Reading from the N-terminus, the 297-residue chain is Protein transport protein SEC13 (297 aa).

6 WD repeats span residues 7 to 46 (AHNE…HKLI), 51 to 92 (GHEG…WSQI), 97 to 138 (VHSA…TTSP), 143 to 195 (AHAI…QTYV), 202 to 244 (GHSD…GPWK), and 252 to 291 (KFPD…KWEP).

The protein belongs to the WD repeat SEC13 family. As to quaternary structure, the basic repeat unit of a COPII coated vesicle is composed of 5 proteins: the small GTPase SAR1, the heterodimeric SEC23-SEC24 complex, and the heterotetrameric SEC13-SEC31 complex. This repeat unit polymerizes to induce membrane deformation into a transport vesicle. Component of the nuclear pore complex (NPC). NPC constitutes the exclusive means of nucleocytoplasmic transport. NPCs allow the passive diffusion of ions and small molecules and the active, nuclear transport receptor-mediated bidirectional transport of macromolecules such as proteins, RNAs, ribonucleoparticles (RNPs), and ribosomal subunits across the nuclear envelope. Due to its 8-fold rotational symmetry, all subunits are present with 8 copies or multiples thereof. SEC13 is part of the heptameric 0.5 MDa autoassembling NUP84 NPC subcomplex (NUP84, NUP85, NUP120, NUP133, NUP145C, SEC13 and SEH1). Component of the SEA complex composed of at least IML1/SEA1, RTC1/SEA2, MTC5/SEA3, NPR2, NPR3, SEA4, SEC13 and SEH1.

The protein resides in the cytoplasmic vesicle. Its subcellular location is the COPII-coated vesicle membrane. It is found in the endoplasmic reticulum membrane. The protein localises to the nucleus. It localises to the nuclear pore complex. The protein resides in the vacuole membrane. Its function is as follows. Functions as a component of the nuclear pore complex (NPC) and the COPII coat. It is one of 5 proteins constituting the COPII coat, which is involved in anterograde (ER to Golgi) double-membrane transport vesicle formation. First the small GTPase SAR1, activated by and binding to the integral ER membrane protein SEC12, exchanges GDP for GTP and recruits the heterodimer SEC23/24, which in turn recruits the heterotetramer SEC13-SEC31. The polymerization of COPII coat complexes then causes physically the deformation (budding) of the membrane, leading to the creation of a transport vesicle. The COPII complex is dissociated upon SAR1-GTP hydrolysis to SAR1-GDP. SEC23 functions as the SAR1 GTPase activating protein, whose activity is stimulated in the presence of SEC13/31. SEC13 is directly or indirectly required for normal ER membrane and nuclear envelope morphology. It also functions as a component of the nuclear pore complex (NPC). NPC components, collectively referred to as nucleoporins (NUPs), can play the role of both NPC structural components and of docking or interaction partners for transiently associated nuclear transport factors. SEC13 is required for efficient mRNA export from the nucleus to the cytoplasm and for correct nuclear pore biogenesis and distribution. Component of the SEA complex which coats the vacuolar membrane and is involved in intracellular trafficking, autophagy, response to nitrogen starvation, and amino acid biogenesis. The chain is Protein transport protein SEC13 (SEC13) from Saccharomyces cerevisiae (strain ATCC 204508 / S288c) (Baker's yeast).